The chain runs to 292 residues: Glutamate racemase (292 aa).

Substrate-binding positions include 28–29 and 60–61; these read DS and YG. The Proton donor/acceptor role is filled by Cys91. Substrate is bound at residue 92-93; it reads NT. Residue Cys200 is the Proton donor/acceptor of the active site. Substrate is bound at residue 201 to 202; the sequence is TH.

This sequence belongs to the aspartate/glutamate racemases family.

The enzyme catalyses L-glutamate = D-glutamate. Its pathway is cell wall biogenesis; peptidoglycan biosynthesis. Functionally, provides the (R)-glutamate required for cell wall biosynthesis. The chain is Glutamate racemase from Trichormus variabilis (strain ATCC 29413 / PCC 7937) (Anabaena variabilis).